The sequence spans 209 residues: Dephospho-CoA kinase (209 aa).

The DPCK domain occupies 13-209 (RIGLTGGIAT…AIEKVVVAEN (197 aa)). 21–26 (ATGKST) is a binding site for ATP.

Belongs to the CoaE family.

It localises to the cytoplasm. The enzyme catalyses 3'-dephospho-CoA + ATP = ADP + CoA + H(+). It participates in cofactor biosynthesis; coenzyme A biosynthesis; CoA from (R)-pantothenate: step 5/5. Catalyzes the phosphorylation of the 3'-hydroxyl group of dephosphocoenzyme A to form coenzyme A. The sequence is that of Dephospho-CoA kinase from Synechococcus elongatus (strain ATCC 33912 / PCC 7942 / FACHB-805) (Anacystis nidulans R2).